Consider the following 177-residue polypeptide: HVA22-like protein a (177 aa).

Helical transmembrane passes span 18 to 38 (VLAG…QAIE), 47 to 67 (QWLT…TFAK), and 68 to 88 (LIEW…WLVI).

This sequence belongs to the DP1 family. As to expression, predominantly expressed in flower buds and stem.

The protein localises to the membrane. The sequence is that of HVA22-like protein a (HVA22A) from Arabidopsis thaliana (Mouse-ear cress).